Consider the following 1091-residue polypeptide: Protein JSN1 (1091 aa).

Disordered regions lie at residues 31 to 51 (EYEN…KLGS) and 75 to 131 (HHSK…GSLT). Residues 99–111 (TVASKTPRASPSR) show a composition bias toward polar residues. Serine 129 is modified (phosphoserine). The residue at position 131 (threonine 131) is a Phosphothreonine. Residues serine 160 and serine 168 each carry the phosphoserine modification. The 87-residue stretch at 340 to 426 (NTISISNVFP…APSKISFAKI (87 aa)) folds into the RRM domain. Low complexity-rich tracts occupy residues 482–494 (QQSQ…NHSS) and 507–520 (NNNN…NNSA). Disordered regions lie at residues 482 to 534 (QQSQ…PPPN) and 568 to 591 (HKGT…EFDP). Residues 557–913 (QINSLIKKSL…RLLEEVGLAS (357 aa)) form the PUM-HD domain. A compositionally biased stretch (polar residues) spans 568–577 (HKGTSDTQNF). Pumilio repeat units follow at residues 617-652 (AMLD…IMLR), 653-689 (KTSK…QVTQ), 690-724 (GVKD…FIFE), 725-760 (SIIA…QSIV), and 801-837 (RLTK…IILD). The tract at residues 911-981 (LASPSSTHNK…GSSASTLSPG (71 aa)) is disordered. Residue serine 913 is modified to Phosphoserine. 2 stretches are compositionally biased toward low complexity: residues 915-935 (SSTH…SISH) and 951-979 (SVSS…STLS).

This is Protein JSN1 (JSN1) from Saccharomyces cerevisiae (strain ATCC 204508 / S288c) (Baker's yeast).